The following is a 456-amino-acid chain: MSKNGTTGNKKKKTKLSTAATIAANIAKANATLNNNNNSNNNSNNTNIGNSINGIPSSLPPSVTLPVEELISFAPECLLFSQLLEFEEKLDASINKRLIDIQEASRRNSIKNIRTLRLSIYNTYSNQSAYYHLDNKSLNSVQERPSWSLRVEGKLLDESQDELVNKSIKSSSSSSSTANKRKFSSFFKKVFIQIGHRDTCEWDKSQTFTETDGFEIKRNGNQEVDIKILMYLDHVPQKYKVLGGLSQLLNIHTDTKPRIILALWHYIKSNTLLDAETKKITCDENLKNIFSLEELQFNQIPQLLREHLSPPDPLEFQYTLHLSGDAKDYEQAYDIQVEVDEPIFNPNPTMRKEISQLNDEINHHIQKVYQHKRKREFMEKLSSDPLGFLNDTTANLVKDFQVSKSTTSTGFEEERHASFYYQPMTEELVKNYLSKQTTPNPTPQQISMAPSTPQTP.

Positions 234 to 310 (HVPQKYKVLG…PQLLREHLSP (77 aa)) constitute an SWIB/MDM2 domain. The interval 435–456 (KQTTPNPTPQQISMAPSTPQTP) is disordered.

It belongs to the SMARCD family. Part of a SWI-SNF complex.

It is found in the nucleus. Functionally, involved in transcriptional activation and repression of select genes by chromatin remodeling (alteration of DNA-nucleosome topology). The sequence is that of SWI/SNF complex component SNF12 homolog (snf12-1) from Dictyostelium discoideum (Social amoeba).